Reading from the N-terminus, the 396-residue chain is Elongation factor Tu (396 aa).

Positions 10–206 (KPHVNIGTIG…AVDSYIPDPE (197 aa)) constitute a tr-type G domain. The G1 stretch occupies residues 19 to 26 (GHVDHGKT). 19-26 (GHVDHGKT) provides a ligand contact to GTP. Residue T26 coordinates Mg(2+). Residues 60–64 (GITIA) are G2. Residues 81-84 (DCPG) are G3. Residues 81 to 85 (DCPGH) and 136 to 139 (NKAD) contribute to the GTP site. The interval 136-139 (NKAD) is G4. The tract at residues 174-176 (SAL) is G5.

This sequence belongs to the TRAFAC class translation factor GTPase superfamily. Classic translation factor GTPase family. EF-Tu/EF-1A subfamily. As to quaternary structure, monomer.

It is found in the cytoplasm. It carries out the reaction GTP + H2O = GDP + phosphate + H(+). GTP hydrolase that promotes the GTP-dependent binding of aminoacyl-tRNA to the A-site of ribosomes during protein biosynthesis. This chain is Elongation factor Tu, found in Pelobacter propionicus (strain DSM 2379 / NBRC 103807 / OttBd1).